The chain runs to 139 residues: ATP synthase epsilon chain (139 aa).

This sequence belongs to the ATPase epsilon chain family. F-type ATPases have 2 components, CF(1) - the catalytic core - and CF(0) - the membrane proton channel. CF(1) has five subunits: alpha(3), beta(3), gamma(1), delta(1), epsilon(1). CF(0) has three main subunits: a, b and c.

The protein localises to the cell inner membrane. Produces ATP from ADP in the presence of a proton gradient across the membrane. This Pseudomonas syringae pv. tomato (strain ATCC BAA-871 / DC3000) protein is ATP synthase epsilon chain.